Here is a 465-residue protein sequence, read N- to C-terminus: Phospholipase A1-II 5 (465 aa).

Serine 233 (acyl-ester intermediate) is an active-site residue. Residues serine 233, aspartate 297, and histidine 336 each act as charge relay system in the active site.

It belongs to the AB hydrolase superfamily. Lipase family.

The protein localises to the cytoplasm. Functionally, acylhydrolase that catalyzes the hydrolysis of phospholipids at the sn-1 position. This chain is Phospholipase A1-II 5, found in Oryza sativa subsp. japonica (Rice).